The primary structure comprises 443 residues: Xaa-Pro dipeptidase (443 aa).

Mn(2+) contacts are provided by Asp-246, Asp-257, His-339, Glu-384, and Glu-423.

It belongs to the peptidase M24B family. Bacterial-type prolidase subfamily. The cofactor is Mn(2+).

It carries out the reaction Xaa-L-Pro dipeptide + H2O = an L-alpha-amino acid + L-proline. In terms of biological role, splits dipeptides with a prolyl residue in the C-terminal position. This is Xaa-Pro dipeptidase from Erwinia tasmaniensis (strain DSM 17950 / CFBP 7177 / CIP 109463 / NCPPB 4357 / Et1/99).